Consider the following 172-residue polypeptide: Adenine phosphoribosyltransferase (172 aa).

This sequence belongs to the purine/pyrimidine phosphoribosyltransferase family. As to quaternary structure, homodimer.

Its subcellular location is the cytoplasm. It carries out the reaction AMP + diphosphate = 5-phospho-alpha-D-ribose 1-diphosphate + adenine. It functions in the pathway purine metabolism; AMP biosynthesis via salvage pathway; AMP from adenine: step 1/1. Functionally, catalyzes a salvage reaction resulting in the formation of AMP, that is energically less costly than de novo synthesis. The sequence is that of Adenine phosphoribosyltransferase from Levilactobacillus brevis (strain ATCC 367 / BCRC 12310 / CIP 105137 / JCM 1170 / LMG 11437 / NCIMB 947 / NCTC 947) (Lactobacillus brevis).